The sequence spans 523 residues: Sensory neuron membrane protein 1 (523 aa).

Residues 1 to 11 (MQLPRELKYAA) lie on the Cytoplasmic side of the membrane. A helical transmembrane segment spans residues 12 to 32 (IAGGVALFGLIFGWVLFPTIL). At 33-458 (KSQLKKEMAL…HQLFIPKRVV (426 aa)) the chain is on the extracellular side. N-linked (GlcNAc...) asparagine glycosylation is present at Asn-229. 3 cysteine pairs are disulfide-bonded: Cys-268–Cys-333, Cys-297–Cys-352, and Cys-335–Cys-341. N-linked (GlcNAc...) asparagine glycosylation is present at Asn-440. A helical transmembrane segment spans residues 459 to 479 (GVLRWWMVSFGSLGAVIGIVF). Residues 480–523 (HFRDHIMRLAVSGDTKVSKVIPEVEEQKDISVIGQAQEPAKVNI) lie on the Cytoplasmic side of the membrane.

Belongs to the CD36 family.

The protein localises to the cell membrane. Functionally, plays an olfactory role that is not restricted to pheromone sensitivity. This chain is Sensory neuron membrane protein 1, found in Helicoverpa assulta (Oriental tobacco budworm).